A 464-amino-acid chain; its full sequence is Nuclear distribution protein nudF 2 (464 aa).

The 33-residue stretch at 9–41 (QAAELNKSIIAYLSAHGLAETLAAFRKESDFPD) folds into the LisH domain. The stretch at 63 to 88 (NSTLMKKLLALESHNKALRNELNSTR) forms a coiled coil. WD repeat units follow at residues 112–151 (SHRD…LERT), 154–195 (GHTM…KNVK), 199–238 (GHDH…RVKT), 241–280 (DHTG…PICK), 285–343 (GHEN…MTLT), 344–383 (GHAS…RCVK), 388–424 (AHDG…AELP), and 426–464 (SKLD…RSHK).

Belongs to the WD repeat LIS1/nudF family. As to quaternary structure, self-associates. Interacts with nudE and dynein.

It is found in the cytoplasm. Its subcellular location is the cytoskeleton. It localises to the spindle pole. In terms of biological role, positively regulates the activity of the minus-end directed microtubule motor protein dynein. May enhance dynein-mediated microtubule sliding by targeting dynein to the microtubule plus end. Required for nuclear migration during vegetative growth as well as development. Required for retrograde early endosome (EE) transport from the hyphal tip. Required for localization of dynein to the mitotic spindle poles. Recruits additional proteins to the dynein complex at SPBs. The sequence is that of Nuclear distribution protein nudF 2 from Penicillium rubens (strain ATCC 28089 / DSM 1075 / NRRL 1951 / Wisconsin 54-1255) (Penicillium chrysogenum).